A 167-amino-acid chain; its full sequence is NADH-quinone oxidoreductase subunit B (167 aa).

Residues Cys40, Cys41, Cys105, and Cys135 each contribute to the [4Fe-4S] cluster site.

The protein belongs to the complex I 20 kDa subunit family. In terms of assembly, NDH-1 is composed of 14 different subunits. Subunits NuoB, C, D, E, F, and G constitute the peripheral sector of the complex. It depends on [4Fe-4S] cluster as a cofactor.

Its subcellular location is the cell inner membrane. It carries out the reaction a quinone + NADH + 5 H(+)(in) = a quinol + NAD(+) + 4 H(+)(out). Functionally, NDH-1 shuttles electrons from NADH, via FMN and iron-sulfur (Fe-S) centers, to quinones in the respiratory chain. The immediate electron acceptor for the enzyme in this species is believed to be ubiquinone. Couples the redox reaction to proton translocation (for every two electrons transferred, four hydrogen ions are translocated across the cytoplasmic membrane), and thus conserves the redox energy in a proton gradient. The protein is NADH-quinone oxidoreductase subunit B of Magnetococcus marinus (strain ATCC BAA-1437 / JCM 17883 / MC-1).